A 214-amino-acid polypeptide reads, in one-letter code: MRNSAPDADIGLVIAVKRLTAAKTRLAPVLSATNRESVVLAMLVDTIGAAITVPAVRSVLVVTPDDGAASAARRLGARVLADPTPAGHRDPLNNALSAAETAIREECSNIVVLQGDLPALKSIELAEALHAARAHPRSFVTDRHGTGTAALFAFGVALQPRFGAGSAQRHRESGAVELTGDWPGLRSDIDTPEDLVAACELGVGPATSQAISAA.

The phosphoenolpyruvate site is built by Thr148, Gly163, and Ser166.

The protein belongs to the CofC family.

The catalysed reaction is phosphoenolpyruvate + GTP + H(+) = enolpyruvoyl-2-diphospho-5'-guanosine + diphosphate. Its pathway is cofactor biosynthesis; coenzyme F420 biosynthesis. Its function is as follows. Guanylyltransferase that catalyzes the activation of phosphoenolpyruvate (PEP) as enolpyruvoyl-2-diphospho-5'-guanosine, via the condensation of PEP with GTP. It is involved in the biosynthesis of coenzyme F420, a hydride carrier cofactor. The polypeptide is Phosphoenolpyruvate guanylyltransferase (Mycolicibacterium gilvum (strain PYR-GCK) (Mycobacterium gilvum (strain PYR-GCK))).